The sequence spans 291 residues: Phosphate-binding protein PstS 2 (291 aa).

The signal sequence occupies residues 1 to 21 (MKFKKMLTLAAIGLSGFGLVA). Cys22 is lipidated: N-palmitoyl cysteine. A lipid anchor (S-diacylglycerol cysteine) is attached at Cys22.

It belongs to the PstS family. As to quaternary structure, the complex is composed of two ATP-binding proteins (PstB), two transmembrane proteins (PstC and PstA) and a solute-binding protein (PstS).

It localises to the cell membrane. Its function is as follows. Part of the ABC transporter complex PstSACB involved in phosphate import. This is Phosphate-binding protein PstS 2 (pstS2) from Streptococcus pneumoniae serotype 4 (strain ATCC BAA-334 / TIGR4).